A 488-amino-acid chain; its full sequence is MNLEETMPLVFERSIPGRIGFSLPESDVPETNAGDYFDQAYIRSVPADLPELSELEIMRHYTNLSNHNFGVDSGFYPLGSCTMKYNPKINEKVARFPGFANIHPNQPESSVQGALELLYDLQTSLVEITGMDEVTLQPAAGAHGEWTGLMLIRAFHEKNGDTKRTKVIIPDSAHGTNPASAAVAGFDVVTVKSNEKGLVDVADLKKVVGEDTAALMLTNPNTLGLFEKDIVEMAEIVHEAGGKLYYDGANLNAIMAKVRPGDMGFDVVHLNLHKTFTGPHGGGGPGSGPIGVKKELIPFLPTPVLTKKDEGYTFDYNYPDSIGRVKPYYGNFGINVRAYTYIRTMGPDGLKLVTEYAVLNANYMMRKLQEAYDLPFDQVCKHEFVLSGNRQKKLGVRTVDIAKRLLDHNFHPPTVYFPLIVGEAIMIEPTETESKETLDSFIDTMLKIAKEAEENPEIVQEAPHSTYVKRLDETRAARKPILRYQKEV.

Lys274 carries the N6-(pyridoxal phosphate)lysine modification.

The protein belongs to the GcvP family. C-terminal subunit subfamily. The glycine cleavage system is composed of four proteins: P, T, L and H. In this organism, the P 'protein' is a heterodimer of two subunits. Requires pyridoxal 5'-phosphate as cofactor.

It catalyses the reaction N(6)-[(R)-lipoyl]-L-lysyl-[glycine-cleavage complex H protein] + glycine + H(+) = N(6)-[(R)-S(8)-aminomethyldihydrolipoyl]-L-lysyl-[glycine-cleavage complex H protein] + CO2. Functionally, the glycine cleavage system catalyzes the degradation of glycine. The P protein binds the alpha-amino group of glycine through its pyridoxal phosphate cofactor; CO(2) is released and the remaining methylamine moiety is then transferred to the lipoamide cofactor of the H protein. This is Probable glycine dehydrogenase (decarboxylating) subunit 2 from Listeria monocytogenes serotype 4a (strain HCC23).